A 423-amino-acid polypeptide reads, in one-letter code: UPF0229 protein PSEEN0423 (423 aa).

The disordered stretch occupies residues 85–107 (GEHIARPQGGGGGGGRGKAGNSG). Over residues 92-107 (QGGGGGGGRGKAGNSG) the composition is skewed to gly residues.

The protein belongs to the UPF0229 family.

The protein is UPF0229 protein PSEEN0423 of Pseudomonas entomophila (strain L48).